A 377-amino-acid chain; its full sequence is N5-carboxyaminoimidazole ribonucleotide synthase (377 aa).

ATP-binding positions include Arg-93, Lys-133, 138–144, 175–178, Glu-183, His-206, and 257–258; these read GYDGKGQ, EEFV, and NE. Residues 97-287 enclose the ATP-grasp domain; the sequence is KALLDNAGVR…QFENHLRAVC (191 aa).

It belongs to the PurK/PurT family. Homodimer.

It catalyses the reaction 5-amino-1-(5-phospho-beta-D-ribosyl)imidazole + hydrogencarbonate + ATP = 5-carboxyamino-1-(5-phospho-D-ribosyl)imidazole + ADP + phosphate + 2 H(+). The protein operates within purine metabolism; IMP biosynthesis via de novo pathway; 5-amino-1-(5-phospho-D-ribosyl)imidazole-4-carboxylate from 5-amino-1-(5-phospho-D-ribosyl)imidazole (N5-CAIR route): step 1/2. Functionally, catalyzes the ATP-dependent conversion of 5-aminoimidazole ribonucleotide (AIR) and HCO(3)(-) to N5-carboxyaminoimidazole ribonucleotide (N5-CAIR). This is N5-carboxyaminoimidazole ribonucleotide synthase from Vibrio parahaemolyticus serotype O3:K6 (strain RIMD 2210633).